A 599-amino-acid polypeptide reads, in one-letter code: MVLDNIRNFSIIAHIDHGKSTLADRLLEYTGALTEREMQNQVLDKMDLERERGITIKAQAVRLNYQANDGRQYILNLIDTPGHVDFTYEVSRSLSACEGALLVVDASQGVEAQTLANVYLALENDLDVFPVLNKIDLPAAEPERVKQEIEDIIGLDAHDAVLASAKEGIGTREILEEIVNKIPPPRGDAAKPLKALLFDSWYDQYQGVIVLVRILDGSVKKGDKIQLMSNRRNYEVLKVGVFSPAMCEVASLSAGEVGFIIGGIKDVQDAKVGDTITNLHNPCDAPLSGFKEVQPMVFSGLYPIDTSQYEQLRDALAKLKLNDSSFSYEPETSLALGFGFRCGFLGLLHMEIIQERLEREFNLDLITTAPTVVYKVHRLDGSIITIESANQLPPTQEIEFVEEPFILASIHVPNEFVGGILALCEEKRGVQREIKYLTPTRVMIVYELPLNEVVLDFYDRLKSITKGYASLDYEHLDYRRSNLERLNIMINGEVVDALSLIIHKEKAYYRGRDLVSKMKELIPRQMFEIAIQAAIGNKVIARETVKALRKDVLAKCYGGDITRKRKLLEKQKEGKKRMKNVGNVELPQEAFLAILKVEG.

Positions 4–186 (DNIRNFSIIA…EIVNKIPPPR (183 aa)) constitute a tr-type G domain. Residues 16 to 21 (DHGKST) and 133 to 136 (NKID) each bind GTP.

It belongs to the TRAFAC class translation factor GTPase superfamily. Classic translation factor GTPase family. LepA subfamily.

The protein localises to the cell inner membrane. The enzyme catalyses GTP + H2O = GDP + phosphate + H(+). In terms of biological role, required for accurate and efficient protein synthesis under certain stress conditions. May act as a fidelity factor of the translation reaction, by catalyzing a one-codon backward translocation of tRNAs on improperly translocated ribosomes. Back-translocation proceeds from a post-translocation (POST) complex to a pre-translocation (PRE) complex, thus giving elongation factor G a second chance to translocate the tRNAs correctly. Binds to ribosomes in a GTP-dependent manner. The sequence is that of Elongation factor 4 from Geotalea daltonii (strain DSM 22248 / JCM 15807 / FRC-32) (Geobacter daltonii).